Reading from the N-terminus, the 739-residue chain is Catalase-peroxidase (739 aa).

Positions 1 to 20 (MGSNECPYSRQNANIGGGGQ) are disordered. The segment at residues 94–217 (WHSAGTYRVF…LAASHMGLIY (124 aa)) is a cross-link (tryptophyl-tyrosyl-methioninium (Trp-Tyr) (with M-243)). H95 serves as the catalytic Proton acceptor. Positions 217 to 243 (YVNPEGPNKNPDPVLAAKDIRITFGRM) form a cross-link, tryptophyl-tyrosyl-methioninium (Tyr-Met) (with W-94). H258 is a heme b binding site.

The protein belongs to the peroxidase family. Peroxidase/catalase subfamily. Homodimer or homotetramer. Requires heme b as cofactor. In terms of processing, formation of the three residue Trp-Tyr-Met cross-link is important for the catalase, but not the peroxidase activity of the enzyme.

Its subcellular location is the cytoplasm. It catalyses the reaction H2O2 + AH2 = A + 2 H2O. The catalysed reaction is 2 H2O2 = O2 + 2 H2O. Its function is as follows. Bifunctional enzyme with both catalase and broad-spectrum peroxidase activity. The chain is Catalase-peroxidase from Emericella nidulans (strain FGSC A4 / ATCC 38163 / CBS 112.46 / NRRL 194 / M139) (Aspergillus nidulans).